We begin with the raw amino-acid sequence, 184 residues long: Photosystem I assembly protein Ycf4 (184 aa).

2 helical membrane passes run 19–39 (ISNFCWACILFLGSLGFLLVG) and 57–77 (IVFFPQGIVMCFYGIAGLFIS).

This sequence belongs to the Ycf4 family.

Its subcellular location is the plastid. The protein localises to the chloroplast thylakoid membrane. Seems to be required for the assembly of the photosystem I complex. In Nymphaea alba (White water-lily), this protein is Photosystem I assembly protein Ycf4.